We begin with the raw amino-acid sequence, 505 residues long: Histidine ammonia-lyase (505 aa).

The segment at residues 141–143 (ASG) is a cross-link (5-imidazolinone (Ala-Gly)). A 2,3-didehydroalanine (Ser) modification is found at Ser-142.

Belongs to the PAL/histidase family. Post-translationally, contains an active site 4-methylidene-imidazol-5-one (MIO), which is formed autocatalytically by cyclization and dehydration of residues Ala-Ser-Gly.

Its subcellular location is the cytoplasm. The enzyme catalyses L-histidine = trans-urocanate + NH4(+). The protein operates within amino-acid degradation; L-histidine degradation into L-glutamate; N-formimidoyl-L-glutamate from L-histidine: step 1/3. The protein is Histidine ammonia-lyase of Bacillus thuringiensis (strain Al Hakam).